The following is a 400-amino-acid chain: Ribosomal RNA dihydrouridine synthase (400 aa).

Residues Ala14, Asp33, Asn34, Arg40, Gly46, Asn51, Val131, Glu367, and Phe380 each coordinate FAD.

This sequence belongs to the BaiN/RdsA family. RdsA subfamily. Requires FAD as cofactor.

The catalysed reaction is a 5,6-dihydrouridine in mRNA + NAD(+) = a uridine in mRNA + NADH + H(+). In terms of biological role, catalyzes the synthesis of 5,6-dihydrouridine (D) at position 2449 in 23S rRNA. Can use NADH as a source of reducing equivalents but not NADPH. The protein is Ribosomal RNA dihydrouridine synthase of Escherichia coli (strain K12).